The following is a 684-amino-acid chain: Frizzled-8 (684 aa).

A signal peptide spans Met-1 to Ala-27. The Extracellular portion of the chain corresponds to Ala-28–Ala-271. An FZ domain is found at Ala-30 to Tyr-151. Intrachain disulfides connect Cys-35-Cys-96, Cys-43-Cys-89, Cys-80-Cys-118, Cys-107-Cys-148, and Cys-111-Cys-135. Residue Asn-49 is glycosylated (N-linked (GlcNAc...) asparagine). Gln-71–Ile-78 contacts hexadecanoate. The wnt-binding stretch occupies residues Ile-95–Tyr-100. The wnt-binding stretch occupies residues Leu-147–Asn-152. Residue Asn-152 is glycosylated (N-linked (GlcNAc...) asparagine). Residues Asp-155 to Ala-222 are disordered. Positions Pro-161 to Gln-175 are enriched in pro residues. 2 stretches are compositionally biased toward low complexity: residues Pro-176–Pro-186 and Gly-199–Ala-222. The chain crosses the membrane as a helical span at residues Phe-272 to Val-292. Residues Ser-293–Pro-308 are Cytoplasmic-facing. The chain crosses the membrane as a helical span at residues Ile-309–Ala-329. The Extracellular segment spans residues Gly-330–Cys-393. The helical transmembrane segment at Thr-394–Leu-414 threads the bilayer. Over Ser-415–Gln-436 the chain is Cytoplasmic. Residues Tyr-437–Ser-457 form a helical membrane-spanning segment. Residues Ser-458 to Gly-480 are Extracellular-facing. N-linked (GlcNAc...) asparagine glycosylation is present at Asn-472. A helical transmembrane segment spans residues Phe-481–Phe-501. The Cytoplasmic portion of the chain corresponds to Val-502–Arg-529. A helical transmembrane segment spans residues Leu-530–Tyr-550. Topologically, residues Glu-551–Ala-581 are extracellular. A helical transmembrane segment spans residues Val-582–Trp-602. Topologically, residues Ser-603–Val-684 are cytoplasmic. Residues Lys-605–Trp-610 carry the Lys-Thr-X-X-X-Trp motif, mediates interaction with the PDZ domain of Dvl family members motif. Positions Ala-630 to Ser-654 are enriched in gly residues. The tract at residues Ala-630–Leu-655 is disordered. The PDZ-binding motif lies at Ser-682–Val-684.

Belongs to the G-protein coupled receptor Fz/Smo family. As to quaternary structure, component of a Wnt-signaling complex that contains a WNT protein, a FZD protein and LRP5 or LRP6. Interacts directly with LRP5 or LRP6; the interaction is promoted by Wnt-binding and signaling and inhibited by DKK1. Interacts (via the PDZ-binding motif) with GPOC (via its PDZ domain). Interacts with RSPO1 and RSPO3. Interacts with glypican GPC3. Ubiquitinated by ZNRF3, leading to its degradation by the proteasome.

It is found in the membrane. The protein localises to the golgi apparatus. It localises to the cell membrane. In terms of biological role, receptor for Wnt proteins. Component of the Wnt-Fzd-LRP5-LRP6 complex that triggers beta-catenin signaling through inducing aggregation of receptor-ligand complexes into ribosome-sized signalosomes. The beta-catenin canonical signaling pathway leads to the activation of disheveled proteins, inhibition of GSK-3 kinase, nuclear accumulation of beta-catenin and activation of Wnt target genes. A second signaling pathway involving PKC and calcium fluxes has been seen for some family members, but it is not yet clear if it represents a distinct pathway or if it can be integrated in the canonical pathway, as PKC seems to be required for Wnt-mediated inactivation of GSK-3 kinase. Both pathways seem to involve interactions with G-proteins. May be involved in transduction and intercellular transmission of polarity information during tissue morphogenesis and/or in differentiated tissues. Coreceptor along with RYK of Wnt proteins, such as WNT1. The chain is Frizzled-8 (Fzd8) from Rattus norvegicus (Rat).